Consider the following 84-residue polypeptide: Sec-independent protein translocase protein TatA (84 aa).

Residues 1–21 (MGGISIWQLLIIAVIVILLFG) form a helical membrane-spanning segment. The disordered stretch occupies residues 40–84 (KKAMSDEDKPADKKDADFEPKNIEQQKTEASAETTAETKKDKEQA). Composition is skewed to basic and acidic residues over residues 42–66 (AMSD…EQQK) and 75–84 (AETKKDKEQA).

Belongs to the TatA/E family. The Tat system comprises two distinct complexes: a TatABC complex, containing multiple copies of TatA, TatB and TatC subunits, and a separate TatA complex, containing only TatA subunits. Substrates initially bind to the TatABC complex, which probably triggers association of the separate TatA complex to form the active translocon.

Its subcellular location is the cell inner membrane. In terms of biological role, part of the twin-arginine translocation (Tat) system that transports large folded proteins containing a characteristic twin-arginine motif in their signal peptide across membranes. TatA could form the protein-conducting channel of the Tat system. The protein is Sec-independent protein translocase protein TatA of Vibrio atlanticus (strain LGP32) (Vibrio splendidus (strain Mel32)).